The chain runs to 199 residues: GTP cyclohydrolase 1 (199 aa).

Zn(2+)-binding residues include Cys-89, His-92, and Cys-161.

It belongs to the GTP cyclohydrolase I family. As to quaternary structure, homomer.

The catalysed reaction is GTP + H2O = 7,8-dihydroneopterin 3'-triphosphate + formate + H(+). The protein operates within cofactor biosynthesis; 7,8-dihydroneopterin triphosphate biosynthesis; 7,8-dihydroneopterin triphosphate from GTP: step 1/1. This Bifidobacterium longum (strain DJO10A) protein is GTP cyclohydrolase 1.